A 364-amino-acid chain; its full sequence is Phenylalanine dehydrogenase (364 aa).

Arg-62 lines the NAD(+) pocket. Lys-86 is an L-phenylalanine binding site. Lys-98 serves as the catalytic Proton donor/acceptor. Residues Asp-133, Ser-164, Thr-168, 255-256 (AM), and 276-278 (AAN) contribute to the NAD(+) site. Position 278 (Asn-278) interacts with L-phenylalanine.

Belongs to the Glu/Leu/Phe/Val dehydrogenases family.

It carries out the reaction L-phenylalanine + NAD(+) + H2O = 3-phenylpyruvate + NH4(+) + NADH + H(+). It functions in the pathway amino-acid biosynthesis; L-phenylalanine biosynthesis; L-phenylalanine from phenylpyruvate (PDH route): step 1/1. Its function is as follows. Catalyzes the reversible NAD(+)-dependent oxidative deamination of L-phenylalanine to phenylpyruvate. The sequence is that of Phenylalanine dehydrogenase from Rhodococcus jostii (strain RHA1).